Consider the following 492-residue polypeptide: Trigger factor (492 aa).

The region spanning 169-254 is the PPIase FKBP-type domain; the sequence is GDRVSIDYVG…VKEVSKPGEL (86 aa). The tract at residues 441 to 492 is disordered; the sequence is LMADDEDAETTTKAKPAKKAAAKKAEAKANEDEAEEPKKKAAPKKKAAKDAE. The span at 463–479 shows a compositional bias: basic and acidic residues; that stretch reads KKAEAKANEDEAEEPKK. Basic residues predominate over residues 480 to 492; the sequence is KAAPKKKAAKDAE.

Belongs to the FKBP-type PPIase family. Tig subfamily.

Its subcellular location is the cytoplasm. It carries out the reaction [protein]-peptidylproline (omega=180) = [protein]-peptidylproline (omega=0). Involved in protein export. Acts as a chaperone by maintaining the newly synthesized protein in an open conformation. Functions as a peptidyl-prolyl cis-trans isomerase. This chain is Trigger factor, found in Mesorhizobium japonicum (strain LMG 29417 / CECT 9101 / MAFF 303099) (Mesorhizobium loti (strain MAFF 303099)).